The primary structure comprises 137 residues: MFNRRVLFLSVFSCAVFMLSGCSSNRFASRDANATYVNTQLKIIPRSQEKIQAQSQCSRSFSLLQKLNTDKFSMYRNQFDEINDAYFFYKRNVDLMNKDSKELMASVLDSKLDMVCVRVDNASFVGIYGKMKKVMDL.

Positions 1–21 (MFNRRVLFLSVFSCAVFMLSG) are cleaved as a signal peptide. Cys22 carries N-palmitoyl cysteine lipidation. Residue Cys22 is the site of S-diacylglycerol cysteine attachment.

It is found in the membrane. This is an uncharacterized protein from Escherichia coli (strain K12).